Consider the following 135-residue polypeptide: C-type lectin BPL (135 aa).

4 cysteine pairs are disulfide-bonded: C3–C14, C31–C131, C38–C133, and C106–C123. In terms of domain architecture, C-type lectin spans 10–132 (MNGLCYKIFN…CESKNAFLCQ (123 aa)). Ca(2+) is bound by residues Q96, D98, E104, and D120. The short motif at 96 to 98 (QPD) is the Galactose-binding element.

It belongs to the true venom lectin family. Homodimer; disulfide-linked. Expressed by the venom gland.

Its subcellular location is the secreted. Galactose-binding protein which recognizes specific carbohydrate structures and agglutinates a variety of animal cells by binding to cell-surface glycoproteins and glycolipids. Calcium-dependent lectin. Shows high hemagglutinating activity in the presence of human erythrocytes, which are agglutinated with a minimum hemagglutination concentration (MHC) of 2.5-0.35 ug/ml. Causes indirect nephrotoxicity. Causes reductions in perfusion pressures, renal vascular resistance, urinary flow, glomerular filtration rate, sodium, potassium and chloride tubular transport. Its effects may be caused by the release of inflammatory mediators. The protein is C-type lectin BPL of Bothrops pirajai (Piraja's lancehead).